Consider the following 1555-residue polypeptide: Probable serine/threonine-protein kinase DDB_G0276181 (1555 aa).

5 disordered regions span residues 1-54 (MTSV…NNSF), 138-208 (IIQQ…NSKL), 342-452 (KLKK…DSPF), 486-508 (TTTT…IKPL), and 781-850 (NNIN…NQNT). Low complexity-rich tracts occupy residues 14 to 53 (NNSG…NNNS), 138 to 205 (IIQQ…NNNN), 359 to 378 (SNIA…KING), and 395 to 431 (NNSQ…SKKP). Residues 58-238 (QVLHTGYLTK…WIEMIKLAIS (181 aa)) form the PH domain. A compositionally biased stretch (polar residues) spans 437–452 (RNISTSDNGSGTDSPF). 2 stretches are compositionally biased toward low complexity: residues 486–504 (TTTT…TNTN) and 781–832 (NNIN…NNNN). Over residues 833-850 (GSGLLSSSPLITISNQNT) the composition is skewed to polar residues. The 324-residue stretch at 986–1309 (VVLHERLGTG…TIIHSISKMI (324 aa)) folds into the Protein kinase domain. 992–1000 (LGTGATGDI) is a binding site for ATP. Residues 1012-1031 (RHISNQDSSGSNSSGSGSGH) form a disordered region. Lysine 1061 serves as a coordination point for ATP. Aspartate 1156 serves as the catalytic Proton acceptor. The segment covering 1340–1376 (VQNNNNNSNNNNNNNNNNNNNNSNSNLNNCNNSSPNL) has biased composition (low complexity). 2 disordered regions span residues 1340–1383 (VQNN…SANN) and 1457–1480 (KKSS…GSSR).

This sequence belongs to the protein kinase superfamily. TKL Ser/Thr protein kinase family.

It carries out the reaction L-seryl-[protein] + ATP = O-phospho-L-seryl-[protein] + ADP + H(+). The catalysed reaction is L-threonyl-[protein] + ATP = O-phospho-L-threonyl-[protein] + ADP + H(+). The sequence is that of Probable serine/threonine-protein kinase DDB_G0276181 from Dictyostelium discoideum (Social amoeba).